The sequence spans 627 residues: Threonine--tRNA ligase (627 aa).

The interval 1–147 is editing domain; the sequence is MRMLLIHSDY…TIVPSGEAKA (147 aa). The tract at residues 208–507 is catalytic; that stretch reads PHVRIMLEQE…QSKGIKPMFP (300 aa). Residues Cys-300, His-352, and His-476 each contribute to the Zn(2+) site.

The protein belongs to the class-II aminoacyl-tRNA synthetase family. In terms of assembly, homodimer. The cofactor is Zn(2+).

Its subcellular location is the cytoplasm. The catalysed reaction is tRNA(Thr) + L-threonine + ATP = L-threonyl-tRNA(Thr) + AMP + diphosphate + H(+). Its function is as follows. Catalyzes the attachment of threonine to tRNA(Thr) in a two-step reaction: L-threonine is first activated by ATP to form Thr-AMP and then transferred to the acceptor end of tRNA(Thr). Also edits incorrectly charged L-seryl-tRNA(Thr). The sequence is that of Threonine--tRNA ligase from Thermococcus onnurineus (strain NA1).